The primary structure comprises 448 residues: Glutamyl-tRNA reductase (448 aa).

Substrate is bound by residues 49–52, Ser109, 114–116, and Gln120; these read TCNR and ETQ. The Nucleophile role is filled by Cys50. 189-194 contributes to the NADP(+) binding site; the sequence is GAGEMS.

This sequence belongs to the glutamyl-tRNA reductase family. Homodimer.

The enzyme catalyses (S)-4-amino-5-oxopentanoate + tRNA(Glu) + NADP(+) = L-glutamyl-tRNA(Glu) + NADPH + H(+). It functions in the pathway porphyrin-containing compound metabolism; protoporphyrin-IX biosynthesis; 5-aminolevulinate from L-glutamyl-tRNA(Glu): step 1/2. Catalyzes the NADPH-dependent reduction of glutamyl-tRNA(Glu) to glutamate 1-semialdehyde (GSA). This chain is Glutamyl-tRNA reductase, found in Staphylococcus aureus (strain bovine RF122 / ET3-1).